A 492-amino-acid chain; its full sequence is Trehalose-phosphatase (492 aa).

A disordered region spans residues 1 to 55 (MTETVTDQGKQRSSKLQKNEAAKDEQVEGKGKETLESGTDKSAEQNSSLLVGQPD). Residues 17–43 (QKNEAAKDEQVEGKGKETLESGTDKSA) show a composition bias toward basic and acidic residues. The Mg(2+) site is built by Asp-213 and Asp-215. Residue Asp-215 is the Proton donor/acceptor of the active site. Residue 332–334 (QRK) participates in substrate binding. Asp-424 is a Mg(2+) binding site.

It belongs to the gob-1 trehalose phosphatase family. Requires Mg(2+) as cofactor.

It catalyses the reaction alpha,alpha-trehalose 6-phosphate + H2O = alpha,alpha-trehalose + phosphate. Its activity is regulated as follows. Inhibited by trehalose 6-sulfate. Functionally, catalyzes the hydrolysis of trehalose 6-phosphate to trehalose and phosphate; prevents the accumulation of toxic levels of trehalose 6-phosphate. This is Trehalose-phosphatase from Brugia malayi (Filarial nematode worm).